A 552-amino-acid polypeptide reads, in one-letter code: ATP synthase subunit alpha (552 aa).

Residue 173–180 coordinates ATP; sequence GDRQTGKT. A disordered region spans residues 526–552; sequence ASPLDPSAVRKESIPVHRAPARTDDEG. The span at 533–552 shows a compositional bias: basic and acidic residues; that stretch reads AVRKESIPVHRAPARTDDEG.

Belongs to the ATPase alpha/beta chains family. In terms of assembly, F-type ATPases have 2 components, CF(1) - the catalytic core - and CF(0) - the membrane proton channel. CF(1) has five subunits: alpha(3), beta(3), gamma(1), delta(1), epsilon(1). CF(0) has three main subunits: a(1), b(2) and c(9-12). The alpha and beta chains form an alternating ring which encloses part of the gamma chain. CF(1) is attached to CF(0) by a central stalk formed by the gamma and epsilon chains, while a peripheral stalk is formed by the delta and b chains.

It is found in the cell membrane. The enzyme catalyses ATP + H2O + 4 H(+)(in) = ADP + phosphate + 5 H(+)(out). Functionally, produces ATP from ADP in the presence of a proton gradient across the membrane. The alpha chain is a regulatory subunit. The chain is ATP synthase subunit alpha from Frankia alni (strain DSM 45986 / CECT 9034 / ACN14a).